A 142-amino-acid chain; its full sequence is Large ribosomal subunit protein uL11 (142 aa).

It belongs to the universal ribosomal protein uL11 family. In terms of assembly, part of the ribosomal stalk of the 50S ribosomal subunit. Interacts with L10 and the large rRNA to form the base of the stalk. L10 forms an elongated spine to which L12 dimers bind in a sequential fashion forming a multimeric L10(L12)X complex. In terms of processing, one or more lysine residues are methylated.

In terms of biological role, forms part of the ribosomal stalk which helps the ribosome interact with GTP-bound translation factors. In Mycobacterium leprae (strain Br4923), this protein is Large ribosomal subunit protein uL11.